The chain runs to 343 residues: Cytoplasmic tRNA 2-thiolation protein 1 (343 aa).

It belongs to the TtcA family. CTU1/NCS6/ATPBD3 subfamily.

The protein localises to the cytoplasm. The protein operates within tRNA modification; 5-methoxycarbonylmethyl-2-thiouridine-tRNA biosynthesis. Plays a central role in 2-thiolation of mcm(5)S(2)U at tRNA wobble positions of tRNA(Lys), tRNA(Glu) and tRNA(Gln). Directly binds tRNAs and probably acts by catalyzing adenylation of tRNAs, an intermediate required for 2-thiolation. It is unclear whether it acts as a sulfurtransferase that transfers sulfur from thiocarboxylated URM1 onto the uridine of tRNAs at wobble position. This chain is Cytoplasmic tRNA 2-thiolation protein 1, found in Drosophila ananassae (Fruit fly).